Reading from the N-terminus, the 1292-residue chain is DNA-directed RNA polymerase subunit beta' (1292 aa).

Positions 70, 72, 85, and 88 each coordinate Zn(2+). Mg(2+)-binding residues include D532, D534, and D536. C911, C987, C994, and C997 together coordinate Zn(2+).

Belongs to the RNA polymerase beta' chain family. The RNAP catalytic core consists of 2 alpha, 1 beta, 1 beta' and 1 omega subunit. When a sigma factor is associated with the core the holoenzyme is formed, which can initiate transcription. It depends on Mg(2+) as a cofactor. Zn(2+) serves as cofactor.

It carries out the reaction RNA(n) + a ribonucleoside 5'-triphosphate = RNA(n+1) + diphosphate. DNA-dependent RNA polymerase catalyzes the transcription of DNA into RNA using the four ribonucleoside triphosphates as substrates. The protein is DNA-directed RNA polymerase subunit beta' of Mycoplasma genitalium (strain ATCC 33530 / DSM 19775 / NCTC 10195 / G37) (Mycoplasmoides genitalium).